The following is a 330-amino-acid chain: Pre-mRNA-splicing factor 38 (330 aa).

Residues S182–Y330 are disordered. Residues L184–A199 show a composition bias toward acidic residues. Basic residues predominate over residues R213–S224. The span at R240–Y330 shows a compositional bias: basic and acidic residues.

The protein belongs to the PRP38 family. In terms of assembly, component of the spliceosome C complex. Interacts with Mfap1 (via C-terminus). In terms of tissue distribution, detected in all germal and follicle cells.

The protein localises to the nucleus. Its function is as follows. Required for pre-mRNA splicing. The polypeptide is Pre-mRNA-splicing factor 38 (Drosophila melanogaster (Fruit fly)).